The chain runs to 209 residues: Kynurenine formamidase (209 aa).

Trp-19 contributes to the substrate binding site. Positions 49, 53, and 55 each coordinate Zn(2+). Residue His-59 is the Proton donor/acceptor of the active site. His-160 and Glu-172 together coordinate Zn(2+).

The protein belongs to the Cyclase 1 superfamily. KynB family. Homodimer. It depends on Zn(2+) as a cofactor.

It carries out the reaction N-formyl-L-kynurenine + H2O = L-kynurenine + formate + H(+). It participates in amino-acid degradation; L-tryptophan degradation via kynurenine pathway; L-kynurenine from L-tryptophan: step 2/2. Catalyzes the hydrolysis of N-formyl-L-kynurenine to L-kynurenine, the second step in the kynurenine pathway of tryptophan degradation. This is Kynurenine formamidase from Ralstonia pickettii (strain 12J).